A 432-amino-acid polypeptide reads, in one-letter code: Elongation factor 1-gamma (432 aa).

A GST N-terminal domain is found at 1–82 (LYTYPENWRA…YVSNEELRGS (82 aa)). The region spanning 83–211 (TPEAAAQVVQ…VKLCEKMAQF (129 aa)) is the GST C-terminal domain. N6-acetyllysine is present on residues Lys142 and Lys207. Over residues 216–249 (FAESQPKKDTPRKEKGSREEKQKPQAERKEEKKA) the composition is skewed to basic and acidic residues. Positions 216–258 (FAESQPKKDTPRKEKGSREEKQKPQAERKEEKKAAAPAPEEEL) are disordered. Lys248 participates in a covalent cross-link: Glycyl lysine isopeptide (Lys-Gly) (interchain with G-Cter in SUMO1). Residues 271–432 (AKDPFAHLPK…KAFNQGKIFK (162 aa)) enclose the EF-1-gamma C-terminal domain. Lys280 is covalently cross-linked (Glycyl lysine isopeptide (Lys-Gly) (interchain with G-Cter in SUMO2)). Position 396 is an N6-acetyllysine (Lys396). At Lys429 the chain carries N6-acetyllysine; alternate. Position 429 is an N6-malonyllysine; alternate (Lys429).

As to quaternary structure, EF-1 is composed of four subunits: alpha, beta, delta, and gamma.

Probably plays a role in anchoring the complex to other cellular components. The protein is Elongation factor 1-gamma (EEF1G) of Sus scrofa (Pig).